Here is a 463-residue protein sequence, read N- to C-terminus: Chaperone SurA (463 aa).

The signal sequence occupies residues 1–25 (MTKPFSVVLASLLAITSTVSPLASA). PpiC domains lie at 174 to 276 (GSQY…KLVE) and 289 to 388 (VTEY…QRVG). Disordered stretches follow at residues 328–348 (QATA…GDLG) and 432–463 (RTGD…KPTR). Residues 440–452 (NATAAPAKSADPA) are compositionally biased toward low complexity. The span at 453–463 (APSPPPAKPTR) shows a compositional bias: pro residues.

Its subcellular location is the periplasm. It catalyses the reaction [protein]-peptidylproline (omega=180) = [protein]-peptidylproline (omega=0). Chaperone involved in the correct folding and assembly of outer membrane proteins. Recognizes specific patterns of aromatic residues and the orientation of their side chains, which are found more frequently in integral outer membrane proteins. May act in both early periplasmic and late outer membrane-associated steps of protein maturation. The sequence is that of Chaperone SurA from Xanthomonas euvesicatoria pv. vesicatoria (strain 85-10) (Xanthomonas campestris pv. vesicatoria).